Here is a 219-residue protein sequence, read N- to C-terminus: Ribose-5-phosphate isomerase A (219 aa).

Substrate-binding positions include 28 to 31 (SGST), 81 to 84 (DGAD), and 94 to 97 (KGGG). E103 serves as the catalytic Proton acceptor. K121 lines the substrate pocket.

It belongs to the ribose 5-phosphate isomerase family. In terms of assembly, homodimer.

It catalyses the reaction aldehydo-D-ribose 5-phosphate = D-ribulose 5-phosphate. It functions in the pathway carbohydrate degradation; pentose phosphate pathway; D-ribose 5-phosphate from D-ribulose 5-phosphate (non-oxidative stage): step 1/1. Functionally, catalyzes the reversible conversion of ribose-5-phosphate to ribulose 5-phosphate. The sequence is that of Ribose-5-phosphate isomerase A from Histophilus somni (strain 129Pt) (Haemophilus somnus).